The following is a 467-amino-acid chain: 3-isopropylmalate dehydratase large subunit (467 aa).

[4Fe-4S] cluster is bound by residues C347, C407, and C410.

Belongs to the aconitase/IPM isomerase family. LeuC type 1 subfamily. As to quaternary structure, heterodimer of LeuC and LeuD. [4Fe-4S] cluster is required as a cofactor.

The enzyme catalyses (2R,3S)-3-isopropylmalate = (2S)-2-isopropylmalate. It functions in the pathway amino-acid biosynthesis; L-leucine biosynthesis; L-leucine from 3-methyl-2-oxobutanoate: step 2/4. Its function is as follows. Catalyzes the isomerization between 2-isopropylmalate and 3-isopropylmalate, via the formation of 2-isopropylmaleate. This chain is 3-isopropylmalate dehydratase large subunit, found in Nostoc sp. (strain PCC 7120 / SAG 25.82 / UTEX 2576).